A 225-amino-acid polypeptide reads, in one-letter code: Small ribosomal subunit protein uS7 (225 aa).

This sequence belongs to the universal ribosomal protein uS7 family. In terms of assembly, component of the small ribosomal subunit. Mature ribosomes consist of a small (40S) and a large (60S) subunit. The 40S subunit contains about 32 different proteins and 1 molecule of RNA (18S). The 60S subunit contains 45 different proteins and 3 molecules of RNA (25S, 5.8S and 5S).

It localises to the cytoplasm. Functionally, component of the ribosome, a large ribonucleoprotein complex responsible for the synthesis of proteins in the cell. The small ribosomal subunit (SSU) binds messenger RNAs (mRNAs) and translates the encoded message by selecting cognate aminoacyl-transfer RNA (tRNA) molecules. The large subunit (LSU) contains the ribosomal catalytic site termed the peptidyl transferase center (PTC), which catalyzes the formation of peptide bonds, thereby polymerizing the amino acids delivered by tRNAs into a polypeptide chain. The nascent polypeptides leave the ribosome through a tunnel in the LSU and interact with protein factors that function in enzymatic processing, targeting, and the membrane insertion of nascent chains at the exit of the ribosomal tunnel. This Candida albicans (strain SC5314 / ATCC MYA-2876) (Yeast) protein is Small ribosomal subunit protein uS7 (RPS5).